Here is a 297-residue protein sequence, read N- to C-terminus: Acetyl-coenzyme A carboxylase carboxyl transferase subunit beta (297 aa).

Residues 27-296 (LWHKCPSCEA…PEEAREAAAV (270 aa)) enclose the CoA carboxyltransferase N-terminal domain. Cys-31, Cys-34, Cys-50, and Cys-53 together coordinate Zn(2+). Residues 31 to 53 (CPSCEAVLYRPELEKTLDVCPKC) form a C4-type zinc finger.

It belongs to the AccD/PCCB family. As to quaternary structure, acetyl-CoA carboxylase is a heterohexamer composed of biotin carboxyl carrier protein (AccB), biotin carboxylase (AccC) and two subunits each of ACCase subunit alpha (AccA) and ACCase subunit beta (AccD). Requires Zn(2+) as cofactor.

It localises to the cytoplasm. It carries out the reaction N(6)-carboxybiotinyl-L-lysyl-[protein] + acetyl-CoA = N(6)-biotinyl-L-lysyl-[protein] + malonyl-CoA. The protein operates within lipid metabolism; malonyl-CoA biosynthesis; malonyl-CoA from acetyl-CoA: step 1/1. Its function is as follows. Component of the acetyl coenzyme A carboxylase (ACC) complex. Biotin carboxylase (BC) catalyzes the carboxylation of biotin on its carrier protein (BCCP) and then the CO(2) group is transferred by the transcarboxylase to acetyl-CoA to form malonyl-CoA. The protein is Acetyl-coenzyme A carboxylase carboxyl transferase subunit beta of Pseudomonas putida (strain ATCC 700007 / DSM 6899 / JCM 31910 / BCRC 17059 / LMG 24140 / F1).